Reading from the N-terminus, the 247-residue chain is Protein ABHD14A (247 aa).

A helical; Signal-anchor for type II membrane protein transmembrane segment spans residues 11 to 31; it reads AALLGLGLLLVFLLYMGLPGP. N-linked (GlcNAc...) asparagine glycosylation is present at N43. Residues S147, D198, and H225 each act as charge relay system in the active site.

The protein belongs to the AB hydrolase superfamily. ABHD14 family. In terms of tissue distribution, widely expressed. Higher expression is detected in brain, kidney, heart, testis, ovary and uterus.

The protein resides in the cytoplasm. Its subcellular location is the membrane. Possible role in granule neuron development. This is Protein ABHD14A from Mus musculus (Mouse).